A 360-amino-acid polypeptide reads, in one-letter code: Protein phosphatase 1L (360 aa).

Topologically, residues 1–25 are extracellular; sequence MIEDTMTLLSLLGRIMRYFLLRPET. Residues 26–42 form a helical membrane-spanning segment; the sequence is LFLLCISLALWSYFFHT. The Cytoplasmic portion of the chain corresponds to 43–360; the sequence is DEVKTIVKSS…FRNSSKTEEQ (318 aa). The PPM-type phosphatase domain occupies 92–351; sequence NVAVYSIQGR…DNITVMVVKF (260 aa). The Mn(2+) site is built by Asp128, Gly129, Asp302, and Asp342.

This sequence belongs to the PP2C family. Interacts with MAP3K7/TAK1. Interacts with MAP3K5. The cofactor is Mg(2+). Mn(2+) serves as cofactor. Ubiquitous. Highly expressed in heart, placenta, lung, liver, kidney and pancreas.

Its subcellular location is the membrane. The enzyme catalyses O-phospho-L-seryl-[protein] + H2O = L-seryl-[protein] + phosphate. The catalysed reaction is O-phospho-L-threonyl-[protein] + H2O = L-threonyl-[protein] + phosphate. Acts as a suppressor of the SAPK signaling pathways by associating with and dephosphorylating MAP3K7/TAK1 and MAP3K5, and by attenuating the association between MAP3K7/TAK1 and MAP2K4 or MAP2K6. This chain is Protein phosphatase 1L (PPM1L), found in Homo sapiens (Human).